The sequence spans 74 residues: DNA-directed RNA polymerase subunit omega (74 aa).

The protein belongs to the RNA polymerase subunit omega family. As to quaternary structure, the RNAP catalytic core consists of 2 alpha, 1 beta, 1 beta' and 1 omega subunit. When a sigma factor is associated with the core the holoenzyme is formed, which can initiate transcription.

It carries out the reaction RNA(n) + a ribonucleoside 5'-triphosphate = RNA(n+1) + diphosphate. In terms of biological role, promotes RNA polymerase assembly. Latches the N- and C-terminal regions of the beta' subunit thereby facilitating its interaction with the beta and alpha subunits. The polypeptide is DNA-directed RNA polymerase subunit omega (Campylobacter jejuni subsp. jejuni serotype O:6 (strain 81116 / NCTC 11828)).